The chain runs to 241 residues: Capsid protein (241 aa).

Residues 1 to 26 carry the Bipartite nuclear localization signal motif; sequence MSPASSWKRKRPSSSSAQASKKRRVY. The segment at 1-30 is disordered; the sequence is MSPASSWKRKRPSSSSAQASKKRRVYRPAV.

It belongs to the geminiviridae capsid protein family. Homomultimer. Interacts with the movement protein. Binds to single-stranded and double-stranded viral DNA.

The protein localises to the virion. It is found in the host nucleus. In terms of biological role, encapsidates the viral genome into characteristic twinned ('geminate') particles. Binds the genomic viral ssDNA and shuttles it into and out of the cell nucleus. Plays a role in protection of the genome from degradation, virus acquisition and transmission by insect vectors, infectivity, and systemic movement. The CP of monopartite geminiviruses is absolutely essential for virus movement. The chain is Capsid protein from Avena sativa (Oat).